Consider the following 185-residue polypeptide: Protein-arginine kinase activator protein (185 aa).

Phosphoarginine occurs at positions 115 and 169. The region spanning 139-174 (RRQIDMLKKELESLIHQEEFENAAHVRDQIRLLEQS) is the UVR domain.

In terms of assembly, interacts with McsB. In terms of processing, phosphorylated on Arg residues by McsB.

Its function is as follows. Activates the phosphorylation activity of the protein-arginine kinase McsB. Is required for the delocalization of competence proteins from the cell poles. This Bacillus subtilis (strain 168) protein is Protein-arginine kinase activator protein (mcsA).